We begin with the raw amino-acid sequence, 352 residues long: Phenylalanine--tRNA ligase alpha subunit (352 aa).

Mg(2+) is bound at residue glutamate 258.

This sequence belongs to the class-II aminoacyl-tRNA synthetase family. Phe-tRNA synthetase alpha subunit type 1 subfamily. Tetramer of two alpha and two beta subunits. It depends on Mg(2+) as a cofactor.

Its subcellular location is the cytoplasm. It carries out the reaction tRNA(Phe) + L-phenylalanine + ATP = L-phenylalanyl-tRNA(Phe) + AMP + diphosphate + H(+). The sequence is that of Phenylalanine--tRNA ligase alpha subunit from Staphylococcus saprophyticus subsp. saprophyticus (strain ATCC 15305 / DSM 20229 / NCIMB 8711 / NCTC 7292 / S-41).